Reading from the N-terminus, the 401-residue chain is MHIKTLTVSQLNRYVKNTLDADFILNNASVKGEISNLKIHSSGHIYFSLKDGGSKINCVMFKSYAYNLKFALENGMDVVALGNVSVYEKEGSYQLYVKDMKREGIGDLYVAFEKLKEKLKEEGLFDDAHKKEIPKFSKKIGVITSPTGAAIKDIINVTKRRNKGIELLIYPALVQGTDASKTLIEGIKTLNKVEDVDIIILARGGGSIEELWAFNNEELAYAVYNSKKPIITGVGHETDFTIIDFVSDRRAPTPSAAAEIAAFDREVLINEILNYKYNIKNSMENIIKEKRNYLNLYKQKIEANSPTNIIANEYRNIDNLKELLNMKIEGKLNKEKNNLSRLSSLLEAHNPLNVLKKGYTLIEDEGNNLITEKEALKELNKINIIFKDGRAKLSIKYIEEF.

It belongs to the XseA family. In terms of assembly, heterooligomer composed of large and small subunits.

The protein localises to the cytoplasm. The catalysed reaction is Exonucleolytic cleavage in either 5'- to 3'- or 3'- to 5'-direction to yield nucleoside 5'-phosphates.. Bidirectionally degrades single-stranded DNA into large acid-insoluble oligonucleotides, which are then degraded further into small acid-soluble oligonucleotides. This chain is Exodeoxyribonuclease 7 large subunit, found in Clostridium botulinum (strain Loch Maree / Type A3).